Reading from the N-terminus, the 671-residue chain is DNA ligase (671 aa).

NAD(+)-binding positions include 32–36 (DAEYD), 81–82 (SL), and Glu113. The active-site N6-AMP-lysine intermediate is Lys115. NAD(+)-binding residues include Arg136, Glu173, Lys290, and Lys314. Positions 408, 411, 426, and 432 each coordinate Zn(2+). The BRCT domain maps to 593 to 671 (EIDSPFAGKT…EAEMIRLLGA (79 aa)).

Belongs to the NAD-dependent DNA ligase family. LigA subfamily. Mg(2+) is required as a cofactor. Requires Mn(2+) as cofactor.

It carries out the reaction NAD(+) + (deoxyribonucleotide)n-3'-hydroxyl + 5'-phospho-(deoxyribonucleotide)m = (deoxyribonucleotide)n+m + AMP + beta-nicotinamide D-nucleotide.. Its function is as follows. DNA ligase that catalyzes the formation of phosphodiester linkages between 5'-phosphoryl and 3'-hydroxyl groups in double-stranded DNA using NAD as a coenzyme and as the energy source for the reaction. It is essential for DNA replication and repair of damaged DNA. The polypeptide is DNA ligase (Salmonella gallinarum (strain 287/91 / NCTC 13346)).